The primary structure comprises 725 residues: Phosphoribosylformylglycinamidine synthase subunit PurL (725 aa).

His42 is a catalytic residue. The ATP site is built by Tyr45 and Lys84. Position 86 (Glu86) interacts with Mg(2+). Substrate is bound by residues 87–90 and Arg109; that span reads SHNH. The active-site Proton acceptor is the His88. Residue Asp110 participates in Mg(2+) binding. Substrate is bound at residue Gln237. Asp265 contributes to the Mg(2+) binding site. A substrate-binding site is contributed by 309–311; it reads ESQ. 2 residues coordinate ATP: Asp491 and Gly528. Residue Asn529 coordinates Mg(2+). Ser531 lines the substrate pocket.

It belongs to the FGAMS family. As to quaternary structure, monomer. Part of the FGAM synthase complex composed of 1 PurL, 1 PurQ and 2 PurS subunits.

Its subcellular location is the cytoplasm. The catalysed reaction is N(2)-formyl-N(1)-(5-phospho-beta-D-ribosyl)glycinamide + L-glutamine + ATP + H2O = 2-formamido-N(1)-(5-O-phospho-beta-D-ribosyl)acetamidine + L-glutamate + ADP + phosphate + H(+). It functions in the pathway purine metabolism; IMP biosynthesis via de novo pathway; 5-amino-1-(5-phospho-D-ribosyl)imidazole from N(2)-formyl-N(1)-(5-phospho-D-ribosyl)glycinamide: step 1/2. Its function is as follows. Part of the phosphoribosylformylglycinamidine synthase complex involved in the purines biosynthetic pathway. Catalyzes the ATP-dependent conversion of formylglycinamide ribonucleotide (FGAR) and glutamine to yield formylglycinamidine ribonucleotide (FGAM) and glutamate. The FGAM synthase complex is composed of three subunits. PurQ produces an ammonia molecule by converting glutamine to glutamate. PurL transfers the ammonia molecule to FGAR to form FGAM in an ATP-dependent manner. PurS interacts with PurQ and PurL and is thought to assist in the transfer of the ammonia molecule from PurQ to PurL. The polypeptide is Phosphoribosylformylglycinamidine synthase subunit PurL (Campylobacter lari (strain RM2100 / D67 / ATCC BAA-1060)).